Reading from the N-terminus, the 417-residue chain is UDP-N-acetylglucosamine 1-carboxyvinyltransferase (417 aa).

22-23 (KN) lines the phosphoenolpyruvate pocket. R92 is a binding site for UDP-N-acetyl-alpha-D-glucosamine. Catalysis depends on C116, which acts as the Proton donor. At C116 the chain carries 2-(S-cysteinyl)pyruvic acid O-phosphothioketal. Residues D304 and V326 each contribute to the UDP-N-acetyl-alpha-D-glucosamine site.

This sequence belongs to the EPSP synthase family. MurA subfamily.

It is found in the cytoplasm. The enzyme catalyses phosphoenolpyruvate + UDP-N-acetyl-alpha-D-glucosamine = UDP-N-acetyl-3-O-(1-carboxyvinyl)-alpha-D-glucosamine + phosphate. Its pathway is cell wall biogenesis; peptidoglycan biosynthesis. Its function is as follows. Cell wall formation. Adds enolpyruvyl to UDP-N-acetylglucosamine. This chain is UDP-N-acetylglucosamine 1-carboxyvinyltransferase, found in Syntrophotalea carbinolica (strain DSM 2380 / NBRC 103641 / GraBd1) (Pelobacter carbinolicus).